Here is a 699-residue protein sequence, read N- to C-terminus: Ferric reduction oxidase 4 (699 aa).

The Cytoplasmic portion of the chain corresponds to 1–9 (MGNMRSLVK). Residues 10–29 (TLMVVLFLGWILVWIMISTN) traverse the membrane as a helical segment. Topologically, residues 30-54 (LFKSKWTPKLSKYLNTTYFGPQGTN) are lumenal. The chain crosses the membrane as a helical span at residues 55–73 (LVLLTVPMMFIAVLSCVYL). Over 74–101 (HIQKKPTQPQREWKLKRIMGRVIMVMNP) the chain is Cytoplasmic. Residues 102–125 (LGIVTATELTFSLLFVALLAWSLY) form a helical membrane-spanning segment. The Lumenal portion of the chain corresponds to 126-190 (NYLYLSYHVH…VGLTSESSIK (65 aa)). The region spanning 157-275 (GYVGNICWAF…HHLYGLYIVF (119 aa)) is the Ferric oxidoreductase domain. A helical membrane pass occupies residues 191–214 (YHIWLGHVSNFCFLVHTVVFLIYW). Heme-binding residues include H192 and H206. At 215–264 (AMINKLMETFAWNPTYVPNLAGTIAMVIGIAMWVTSLPSFRRKKFEIFFY) the chain is on the cytoplasmic side. Residues 265–289 (THHLYGLYIVFYVIHVGDSWFCMIL) traverse the membrane as a helical segment. Heme-binding residues include H266 and H279. At 290–311 (PNIFLFFIDRYLRFLQSTKRSR) the chain is on the lumenal side. The 104-residue stretch at 305–408 (QSTKRSRLVS…EGPYGPNSFD (104 aa)) folds into the FAD-binding FR-type domain. The helical transmembrane segment at 312 to 332 (LVSARILPSDNLELTFSKTPG) threads the bilayer. At 333-525 (LHYTPTSILF…PISPVLGPNN (193 aa)) the chain is on the cytoplasmic side. 354 to 357 (HPFT) is a binding site for FAD. Position 400-403 (400-403 (GPYG)) interacts with NAD(+). A helical transmembrane segment spans residues 526–548 (FLWLGVVILSSFVMFLLLIGIVT). Residues 549 to 568 (RYYIYPVDHNTGSIYNFSYR) lie on the Lumenal side of the membrane. Residues 569 to 590 (GLWDMFLGSACIFISSSVVFLW) traverse the membrane as a helical segment. Residues 591–699 (RKKQNKEGDK…LHFEAISFNW (109 aa)) lie on the Cytoplasmic side of the membrane.

Belongs to the ferric reductase (FRE) family. FAD serves as cofactor. In terms of tissue distribution, expressed in siliques. Detected at low levels in roots, cotyledon veins and shoots.

The protein localises to the membrane. It catalyses the reaction 2 a Fe(II)-siderophore + NAD(+) + H(+) = 2 a Fe(III)-siderophore + NADH. Functionally, ferric chelate reductase. May participate in the transport of electrons to a Fe(3+) ion via FAD and heme intermediates. May function as root surface cupric chelate reductase and participate in the reduction of Cu(2+), for Cu(+) acquisition via Cu(+) transporters in response to copper deficiency. This is Ferric reduction oxidase 4 (FRO4) from Arabidopsis thaliana (Mouse-ear cress).